A 409-amino-acid chain; its full sequence is Probable beta-1,3-galactosyltransferase 3 (409 aa).

The helical; Signal-anchor for type II membrane protein transmembrane segment at 20-42 (WTFLLCFGSFCFGILFTDRMWII) threads the bilayer.

Belongs to the glycosyltransferase 31 family. It depends on Mn(2+) as a cofactor.

It is found in the golgi apparatus membrane. It participates in protein modification; protein glycosylation. In terms of biological role, beta-1,3-galactosyltransferase that transfers galactose from UDP-galactose to substrates with a terminal glycosyl residue. In Arabidopsis thaliana (Mouse-ear cress), this protein is Probable beta-1,3-galactosyltransferase 3 (B3GALT3).